The primary structure comprises 204 residues: Urease accessory protein UreG 1 (204 aa).

A GTP-binding site is contributed by 14-21 (GPVGSGKT).

The protein belongs to the SIMIBI class G3E GTPase family. UreG subfamily. In terms of assembly, homodimer. UreD, UreF and UreG form a complex that acts as a GTP-hydrolysis-dependent molecular chaperone, activating the urease apoprotein by helping to assemble the nickel containing metallocenter of UreC. The UreE protein probably delivers the nickel.

It is found in the cytoplasm. In terms of biological role, facilitates the functional incorporation of the urease nickel metallocenter. This process requires GTP hydrolysis, probably effectuated by UreG. This chain is Urease accessory protein UreG 1, found in Methylorubrum populi (strain ATCC BAA-705 / NCIMB 13946 / BJ001) (Methylobacterium populi).